The primary structure comprises 247 residues: Cell division protein ZapD (247 aa).

It belongs to the ZapD family. Interacts with FtsZ.

It localises to the cytoplasm. Its function is as follows. Cell division factor that enhances FtsZ-ring assembly. Directly interacts with FtsZ and promotes bundling of FtsZ protofilaments, with a reduction in FtsZ GTPase activity. This is Cell division protein ZapD from Enterobacter sp. (strain 638).